The following is a 646-amino-acid chain: Threonine--tRNA ligase (646 aa).

The TGS domain maps to 1-61; it reads MIKITFPDGS…NEDASVVLYK (61 aa). Positions 242–541 are catalytic; that stretch reads DHRKIGKEMQ…LIEHTAGKFP (300 aa). Residues C337, H388, and H518 each coordinate Zn(2+).

Belongs to the class-II aminoacyl-tRNA synthetase family. Homodimer. Zn(2+) serves as cofactor.

Its subcellular location is the cytoplasm. The enzyme catalyses tRNA(Thr) + L-threonine + ATP = L-threonyl-tRNA(Thr) + AMP + diphosphate + H(+). Functionally, catalyzes the attachment of threonine to tRNA(Thr) in a two-step reaction: L-threonine is first activated by ATP to form Thr-AMP and then transferred to the acceptor end of tRNA(Thr). Also edits incorrectly charged L-seryl-tRNA(Thr). The protein is Threonine--tRNA ligase of Bacteroides fragilis (strain YCH46).